Reading from the N-terminus, the 317-residue chain is Protein lifeguard 2 (317 aa).

Positions 1-54 (MTQGKLSVANKAPGTEGQQHQANGEKKDAPAVPSAPPSYEEATSGEGLKAGTFP) are disordered. 3 consecutive transmembrane segments (helical) span residues 107–127 (VYTI…LFTF), 139–159 (PGWY…LACC), and 166–186 (FPWN…LTGM). N-linked (GlcNAc...) asparagine glycosylation occurs at Asn192. The next 4 helical transmembrane spans lie at 195–215 (SVLL…IFSF), 226–246 (GVLF…AVLL), 252–272 (PWLH…FLAF), and 291–311 (IFGA…FLQL).

The protein belongs to the BI1 family. LFG subfamily. In terms of assembly, interacts with FAS/TNFRSF6 and BAX. Brain. Highly expressed in cerebellum, also found in cortex, olfactory bulb, and hippocampus.

It localises to the cell membrane. The protein resides in the membrane raft. The protein localises to the postsynaptic cell membrane. Its function is as follows. Antiapoptotic protein which protects cells uniquely from Fas-induced apoptosis. Regulates Fas-mediated apoptosis in neurons by interfering with caspase-8 activation. Plays a role in cerebellar development by affecting cerebellar size, internal granular layer (IGL) thickness, and Purkinje cell (PC) development. The polypeptide is Protein lifeguard 2 (Faim2) (Mus musculus (Mouse)).